A 71-amino-acid chain; its full sequence is Long neurotoxin 3 (71 aa).

Cystine bridges form between Cys-3–Cys-20, Cys-14–Cys-41, Cys-26–Cys-30, Cys-45–Cys-56, and Cys-57–Cys-62.

It belongs to the three-finger toxin family. Long-chain subfamily. Type II alpha-neurotoxin sub-subfamily. In terms of tissue distribution, expressed by the venom gland.

Its subcellular location is the secreted. Its function is as follows. Binds with high affinity to muscular (alpha-1/CHRNA1) and neuronal (alpha-7/CHRNA7) nicotinic acetylcholine receptor (nAChR) and inhibits acetylcholine from binding to the receptor, thereby impairing neuromuscular and neuronal transmission. In Naja naja (Indian cobra), this protein is Long neurotoxin 3.